A 457-amino-acid polypeptide reads, in one-letter code: Argininosuccinate lyase (457 aa).

This sequence belongs to the lyase 1 family. Argininosuccinate lyase subfamily.

It localises to the cytoplasm. The enzyme catalyses 2-(N(omega)-L-arginino)succinate = fumarate + L-arginine. It participates in amino-acid biosynthesis; L-arginine biosynthesis; L-arginine from L-ornithine and carbamoyl phosphate: step 3/3. In Shigella sonnei (strain Ss046), this protein is Argininosuccinate lyase.